Here is a 725-residue protein sequence, read N- to C-terminus: Putative oligopeptide transporter YGL114W (725 aa).

A run of 9 helical transmembrane segments spans residues 28–48, 134–154, 254–274, 353–373, 449–469, 472–492, 564–584, 644–664, and 697–717; these read ATIA…QFGL, FREL…FAVP, IIIL…SYFV, WILW…FIVV, ISGC…LFGI, IPLY…ILGI, FCAQ…MYLC, YGYG…GIFN, and IVFS…NMLF.

This sequence belongs to the oligopeptide OPT transporter family.

Its subcellular location is the membrane. The sequence is that of Putative oligopeptide transporter YGL114W from Saccharomyces cerevisiae (strain ATCC 204508 / S288c) (Baker's yeast).